The primary structure comprises 420 residues: UDP-N-acetylmuramoylalanine--D-glutamate ligase (420 aa).

109-115 (GSAGKTT) contributes to the ATP binding site.

It belongs to the MurCDEF family.

Its subcellular location is the cytoplasm. The catalysed reaction is UDP-N-acetyl-alpha-D-muramoyl-L-alanine + D-glutamate + ATP = UDP-N-acetyl-alpha-D-muramoyl-L-alanyl-D-glutamate + ADP + phosphate + H(+). The protein operates within cell wall biogenesis; peptidoglycan biosynthesis. In terms of biological role, cell wall formation. Catalyzes the addition of glutamate to the nucleotide precursor UDP-N-acetylmuramoyl-L-alanine (UMA). The sequence is that of UDP-N-acetylmuramoylalanine--D-glutamate ligase from Chlamydia abortus (strain DSM 27085 / S26/3) (Chlamydophila abortus).